The sequence spans 251 residues: Phosphomannomutase (251 aa).

Residue D18 is the Nucleophile of the active site. The Mg(2+) site is built by D18 and D20. D20 acts as the Proton donor/acceptor in catalysis. The alpha-D-mannose 1-phosphate site is built by R27, R129, R140, R147, S185, and D187. Residues D213, F225, D227, and T230 each coordinate Mg(2+).

The protein belongs to the eukaryotic PMM family. As to quaternary structure, homodimer. The cofactor is Mg(2+).

The protein resides in the cytoplasm. It carries out the reaction alpha-D-mannose 1-phosphate = D-mannose 6-phosphate. It participates in nucleotide-sugar biosynthesis; GDP-alpha-D-mannose biosynthesis; alpha-D-mannose 1-phosphate from D-fructose 6-phosphate: step 2/2. Functionally, catalyzes the interconversion of mannose-6-phosphate to mannose-1-phosphate, the precursor for the synthesis of GDP-mannose. GDP-mannose is an essential sugar nucleotide for the synthesis of D-mannose-containing cell wall polysaccharides (galactomannans and glucomannans), glycolipids, glycoproteins and the antioxidant L-ascorbate. This is Phosphomannomutase from Galdieria sulphuraria (Red alga).